A 391-amino-acid polypeptide reads, in one-letter code: DNA replication and repair protein RecF (391 aa).

30–37 (GSNGQGKT) contributes to the ATP binding site.

It belongs to the RecF family.

Its subcellular location is the cytoplasm. Its function is as follows. The RecF protein is involved in DNA metabolism; it is required for DNA replication and normal SOS inducibility. RecF binds preferentially to single-stranded, linear DNA. It also seems to bind ATP. This chain is DNA replication and repair protein RecF, found in Saccharopolyspora erythraea (strain ATCC 11635 / DSM 40517 / JCM 4748 / NBRC 13426 / NCIMB 8594 / NRRL 2338).